Consider the following 210-residue polypeptide: Regulator of G-protein signaling 17 (210 aa).

The tract at residues 1–21 (MRKRQQSQNEGTSAVSQAPGN) is disordered. One can recognise an RGS domain in the interval 84–200 (NFDKMMKTPA…LNSQIYKSLV (117 aa)).

Interacts with GNAI1 and GNAQ. Interacts with GNAZ and GNAI2. Forms a complex with mu-opioid receptors and G(alpha)z/i2 subunits, including GNAZ and GNAI2; the formation of this complex results in mu-opioid receptor desensitization. N- and O-glycosylated in synapsomal membranes. Post-translationally, serine phosphorylated in synapsomal membranes. In terms of processing, sumoylated with SUMO1 and SUM02 in synaptosomes. The sumoylated forms act as a scaffold for sequestering mu-opioid receptor-activated G(alpha) subunits.

Its subcellular location is the membrane. The protein resides in the synapse. It is found in the synaptosome. The protein localises to the nucleus. It localises to the cytoplasm. Functionally, regulates G protein-coupled receptor signaling cascades, including signaling via muscarinic acetylcholine receptor CHRM2 and dopamine receptor DRD2. Inhibits signal transduction by increasing the GTPase activity of G protein alpha subunits, thereby driving them into their inactive GDP-bound form. Binds selectively to GNAZ and GNAI2 subunits, accelerates their GTPase activity and regulates their signaling activities. Negatively regulates mu-opioid receptor-mediated activation of the G-proteins. The sequence is that of Regulator of G-protein signaling 17 (RGS17) from Gallus gallus (Chicken).